A 638-amino-acid chain; its full sequence is uncharacterized protein (638 aa).

An N-terminal signal peptide occupies residues 1–31 (MKFIKFNDSTIDSFLFMMLTDLAKTLTKSEA). Composition is skewed to basic and acidic residues over residues 247 to 256 (EEKKAPKLSD), 273 to 284 (EEMPTWHRETEA), 301 to 310 (DLGKDASREG), and 329 to 342 (RKDY…ESQK). Disordered stretches follow at residues 247–285 (EEKK…TEAP) and 301–354 (DLGK…ADGK). A VWFA domain is found at 445-632 (FTLLVDCSAS…DVLYPLLKKL (188 aa)).

This is an uncharacterized protein from Bacillus subtilis (strain 168).